Reading from the N-terminus, the 542-residue chain is Berberine bridge enzyme-like 25 (542 aa).

The signal sequence occupies residues 1 to 30 (MGNSKPLPTISCISVFALYFSFYTITLTSS). Residues Cys-40 and Cys-104 are joined by a disulfide bond. Asn-61 is a glycosylation site (N-linked (GlcNAc...) asparagine). The region spanning 82 to 258 (TMPKPGFIFK…LSWKIKLVPV (177 aa)) is the FAD-binding PCMH-type domain. The residue at position 119 (His-119) is a Pros-8alpha-FAD histidine. Residues Asn-308 and Asn-436 are each glycosylated (N-linked (GlcNAc...) asparagine).

It belongs to the oxygen-dependent FAD-linked oxidoreductase family. Requires FAD as cofactor.

It localises to the secreted. It is found in the cell wall. The polypeptide is Berberine bridge enzyme-like 25 (Arabidopsis thaliana (Mouse-ear cress)).